The chain runs to 406 residues: Tryptophan synthase beta chain (406 aa).

Lysine 99 carries the post-translational modification N6-(pyridoxal phosphate)lysine.

This sequence belongs to the TrpB family. In terms of assembly, tetramer of two alpha and two beta chains. Requires pyridoxal 5'-phosphate as cofactor.

The catalysed reaction is (1S,2R)-1-C-(indol-3-yl)glycerol 3-phosphate + L-serine = D-glyceraldehyde 3-phosphate + L-tryptophan + H2O. It participates in amino-acid biosynthesis; L-tryptophan biosynthesis; L-tryptophan from chorismate: step 5/5. Its function is as follows. The beta subunit is responsible for the synthesis of L-tryptophan from indole and L-serine. In Brucella canis (strain ATCC 23365 / NCTC 10854 / RM-666), this protein is Tryptophan synthase beta chain.